Reading from the N-terminus, the 599-residue chain is Elongation factor 4 (599 aa).

The region spanning 2-184 (KNIRNFSIIA…RLVRDIPPPE (183 aa)) is the tr-type G domain. GTP is bound by residues 14–19 (DHGKST) and 131–134 (NKID).

The protein belongs to the TRAFAC class translation factor GTPase superfamily. Classic translation factor GTPase family. LepA subfamily.

It is found in the cell inner membrane. It carries out the reaction GTP + H2O = GDP + phosphate + H(+). Functionally, required for accurate and efficient protein synthesis under certain stress conditions. May act as a fidelity factor of the translation reaction, by catalyzing a one-codon backward translocation of tRNAs on improperly translocated ribosomes. Back-translocation proceeds from a post-translocation (POST) complex to a pre-translocation (PRE) complex, thus giving elongation factor G a second chance to translocate the tRNAs correctly. Binds to ribosomes in a GTP-dependent manner. The sequence is that of Elongation factor 4 from Escherichia coli (strain SE11).